The sequence spans 261 residues: Adenosylcobinamide-GDP ribazoletransferase (261 aa).

A run of 7 helical transmembrane segments spans residues 4–26 (GLNG…QIPW), 40–60 (LTGL…SPFL), 62–82 (PLVL…GLHL), 110–130 (VGAF…LLLM), 140–160 (FTWL…VQLI), 197–217 (CFLL…IWLF), and 237–257 (IGAS…TFFL).

The protein belongs to the CobS family. Mg(2+) serves as cofactor.

The protein resides in the cell membrane. It carries out the reaction alpha-ribazole + adenosylcob(III)inamide-GDP = adenosylcob(III)alamin + GMP + H(+). The enzyme catalyses alpha-ribazole 5'-phosphate + adenosylcob(III)inamide-GDP = adenosylcob(III)alamin 5'-phosphate + GMP + H(+). It participates in cofactor biosynthesis; adenosylcobalamin biosynthesis; adenosylcobalamin from cob(II)yrinate a,c-diamide: step 7/7. Functionally, joins adenosylcobinamide-GDP and alpha-ribazole to generate adenosylcobalamin (Ado-cobalamin). Also synthesizes adenosylcobalamin 5'-phosphate from adenosylcobinamide-GDP and alpha-ribazole 5'-phosphate. This is Adenosylcobinamide-GDP ribazoletransferase from Halalkalibacterium halodurans (strain ATCC BAA-125 / DSM 18197 / FERM 7344 / JCM 9153 / C-125) (Bacillus halodurans).